The chain runs to 404 residues: Nicotinate phosphoribosyltransferase (404 aa).

His-225 carries the phosphohistidine; by autocatalysis modification.

The protein belongs to the NAPRTase family. Transiently phosphorylated on a His residue during the reaction cycle. Phosphorylation strongly increases the affinity for substrates and increases the rate of nicotinate D-ribonucleotide production. Dephosphorylation regenerates the low-affinity form of the enzyme, leading to product release.

The catalysed reaction is nicotinate + 5-phospho-alpha-D-ribose 1-diphosphate + ATP + H2O = nicotinate beta-D-ribonucleotide + ADP + phosphate + diphosphate. It participates in cofactor biosynthesis; NAD(+) biosynthesis; nicotinate D-ribonucleotide from nicotinate: step 1/1. Functionally, catalyzes the synthesis of beta-nicotinate D-ribonucleotide from nicotinate and 5-phospho-D-ribose 1-phosphate at the expense of ATP. The sequence is that of Nicotinate phosphoribosyltransferase from Acinetobacter baumannii (strain ATCC 17978 / DSM 105126 / CIP 53.77 / LMG 1025 / NCDC KC755 / 5377).